We begin with the raw amino-acid sequence, 169 residues long: Large ribosomal subunit protein bL19m (169 aa).

The N-terminal 16 residues, Met-1–Tyr-16, are a transit peptide targeting the mitochondrion.

The protein belongs to the bacterial ribosomal protein bL19 family. As to quaternary structure, component of the mitochondrial large ribosomal subunit (mt-LSU). Mature yeast 74S mitochondrial ribosomes consist of a small (37S) and a large (54S) subunit. The 37S small subunit contains a 15S ribosomal RNA (15S mt-rRNA) and 34 different proteins. The 54S large subunit contains a 21S rRNA (21S mt-rRNA) and 46 different proteins.

Its subcellular location is the mitochondrion. Component of the mitochondrial ribosome (mitoribosome), a dedicated translation machinery responsible for the synthesis of mitochondrial genome-encoded proteins, including at least some of the essential transmembrane subunits of the mitochondrial respiratory chain. The mitoribosomes are attached to the mitochondrial inner membrane and translation products are cotranslationally integrated into the membrane. bL19m is essential for respiration. The chain is Large ribosomal subunit protein bL19m (IMG1) from Saccharomyces cerevisiae (strain ATCC 204508 / S288c) (Baker's yeast).